The chain runs to 125 residues: uncharacterized protein (125 aa).

Its subcellular location is the plastid. This is an uncharacterized protein from Euglena longa (Euglenophycean alga).